The following is a 241-amino-acid chain: Kynurenine formamidase (241 aa).

The HGGXW signature appears at 23–27 (HGGAW). The Nucleophile role is filled by Ser95. Residues Asp191 and His223 contribute to the active site.

This sequence belongs to the kynurenine formamidase family. As to quaternary structure, homodimer.

The enzyme catalyses N-formyl-L-kynurenine + H2O = L-kynurenine + formate + H(+). It participates in amino-acid degradation; L-tryptophan degradation via kynurenine pathway; L-kynurenine from L-tryptophan: step 2/2. Functionally, catalyzes the hydrolysis of N-formyl-L-kynurenine to L-kynurenine, the second step in the kynurenine pathway of tryptophan degradation. Kynurenine may be further oxidized to nicotinic acid, NAD(H) and NADP(H). Required for elimination of toxic metabolites. This is Kynurenine formamidase from Eremothecium gossypii (strain ATCC 10895 / CBS 109.51 / FGSC 9923 / NRRL Y-1056) (Yeast).